Consider the following 389-residue polypeptide: S-adenosylmethionine synthase 3 (389 aa).

A Mg(2+)-binding site is contributed by glutamate 9. Histidine 15 is an ATP binding site. Glutamate 43 contacts K(+). Residues glutamate 56 and glutamine 99 each contribute to the L-methionine site. ATP contacts are provided by residues 167–169, 235–238, aspartate 246, 252–253, alanine 269, lysine 273, and lysine 277; these read DGK, SGRF, and RK. Residue aspartate 246 participates in L-methionine binding. Lysine 277 is a binding site for L-methionine.

This sequence belongs to the AdoMet synthase family. Homotetramer. Requires Mn(2+) as cofactor. Mg(2+) serves as cofactor. Co(2+) is required as a cofactor. It depends on K(+) as a cofactor.

It localises to the cytoplasm. It carries out the reaction L-methionine + ATP + H2O = S-adenosyl-L-methionine + phosphate + diphosphate. Its pathway is amino-acid biosynthesis; S-adenosyl-L-methionine biosynthesis; S-adenosyl-L-methionine from L-methionine: step 1/1. In terms of biological role, catalyzes the formation of S-adenosylmethionine from methionine and ATP. The reaction comprises two steps that are both catalyzed by the same enzyme: formation of S-adenosylmethionine (AdoMet) and triphosphate, and subsequent hydrolysis of the triphosphate. In Vitis vinifera (Grape), this protein is S-adenosylmethionine synthase 3 (METK3).